The following is a 242-amino-acid chain: Adenylate kinase 1 (242 aa).

ATP contacts are provided by residues 38-43 (GSGKGT) and Gly42. The tract at residues 58–87 (STGDLLREAAEKKTELGLKIKNIINEGKLV) is NMP. Residues Thr59, Arg64, 85 to 87 (KLV), Gly113, 113 to 116 (GYPR), and Gln120 contribute to the AMP site. The interval 154-191 (GRLIHKPSGRIYHKIFNPPKVPFRDDVTNEPLIQREDD) is LID. Residues Arg155 and Tyr165 each coordinate ATP. AMP is bound at residue Arg199. Residue Ala229 participates in ATP binding.

The protein belongs to the adenylate kinase family.

It localises to the cytoplasm. It catalyses the reaction AMP + ATP = 2 ADP. Inhibited by the dinucleoside pentaphosphate compound P1,P5-di(adenosine-5') pentaphosphate (AP5A). Functionally, catalyzes the reversible transfer of the terminal phosphate group between ATP and AMP. Has very low activity with CTP, GTP, ITP and UTP and no activity with GMP, CMP, UMP or IMP in vitro. The protein is Adenylate kinase 1 of Plasmodium falciparum (isolate 3D7).